The primary structure comprises 153 residues: Regulatory protein RecX (153 aa).

This sequence belongs to the RecX family.

Its subcellular location is the cytoplasm. Functionally, modulates RecA activity. The sequence is that of Regulatory protein RecX from Syntrophotalea carbinolica (strain DSM 2380 / NBRC 103641 / GraBd1) (Pelobacter carbinolicus).